Consider the following 89-residue polypeptide: Cornifin (89 aa).

The segment at Met1 to Pro29 is disordered. The residue at position 2 (Ser2) is an N-acetylserine. Tandem repeats lie at residues Ser3 to Pro14, Gln18 to Pro29, Glu31 to Lys38, Glu39 to Pro46, Glu47 to Pro54, Glu55 to Pro62, Glu63 to Pro70, and Glu71 to Thr78. Residues Ser3–Pro29 are 2 X 12 AA approximate repeats. Positions Glu31–Thr78 are 6 X 8 AA approximate tandem repeats. The interval Lys68–Lys89 is disordered. Over residues Ser75–Lys89 the composition is skewed to polar residues.

The protein belongs to the cornifin (SPRR) family.

Its subcellular location is the cytoplasm. In terms of biological role, cross-linked envelope protein of keratinocytes. It is a keratinocyte protein that first appears in the cell cytosol, but ultimately becomes cross-linked to membrane proteins by transglutaminase. All that results in the formation of an insoluble envelope beneath the plasma membrane. This Macaca mulatta (Rhesus macaque) protein is Cornifin (SPRR1).